A 489-amino-acid chain; its full sequence is Netrin-5 (489 aa).

An N-terminal signal peptide occupies residues 1-16; the sequence is MPVTFALLLLLGQATA. N-linked (GlcNAc...) asparagine glycosylation occurs at N62. Disulfide bonds link C157–C166, C159–C175, C177–C186, C189–C209, C212–C221, C214–C239, C242–C251, C254–C272, C275–C287, C277–C294, C296–C305, C308–C322, C345–C418, C349–C420, and C364–C475. 3 consecutive Laminin EGF-like domains span residues 157–211, 212–274, and 275–324; these read CQCH…PCLP, CSCN…ACRA, and CQCH…PCQR. The NTR domain occupies 345-475; the sequence is CQNYCNMSDT…LQQEERAGGC (131 aa). Residues 470 to 489 are disordered; the sequence is ERAGGCRGVRAPTPSPRPEH.

The protein localises to the secreted. In terms of biological role, plays a role in neurogenesis. Prevents motor neuron cell body migration out of the neural tube. This is Netrin-5 (NTN5) from Homo sapiens (Human).